Consider the following 334-residue polypeptide: MSAIRLGTRASTLATTQSEMVAGLLRSEGLDVNLTTITTHGDTSTASLAAMGGIGVFASAIRAALLEGEADIAVHSFKDLPTGRPLGLAIGAVPARADPRDALVARDGLTLHDLPQEASVGTGSPRRAAQLLAVRPDLTIVDIRGNVDTRLGRVKGLGRYAKNGGKEDLDAVVLAASGLARLGHSGAVTEFLDPSVVLPAPAQGALAVECRTADSRHGKLAKALARIDDRRTRLAATAERAVLSHLEAGCAAPIGALAQLKPVSGKSLQVLTLDVVVAAVDGSRTVREQVSVELPAEVEPALAAAHTLGVTAAEELLDDGAADVADLKASGSTR.

At C250 the chain carries S-(dipyrrolylmethanemethyl)cysteine.

The protein belongs to the HMBS family. Monomer. Dipyrromethane is required as a cofactor.

It carries out the reaction 4 porphobilinogen + H2O = hydroxymethylbilane + 4 NH4(+). Its pathway is porphyrin-containing compound metabolism; protoporphyrin-IX biosynthesis; coproporphyrinogen-III from 5-aminolevulinate: step 2/4. In terms of biological role, tetrapolymerization of the monopyrrole PBG into the hydroxymethylbilane pre-uroporphyrinogen in several discrete steps. The polypeptide is Porphobilinogen deaminase (Cutibacterium acnes (strain DSM 16379 / KPA171202) (Propionibacterium acnes)).